Reading from the N-terminus, the 503-residue chain is Long-chain-fatty-acid--CoA ligase FadD13 (503 aa).

This sequence belongs to the ATP-dependent AMP-binding enzyme family. As to quaternary structure, homodimer.

The protein resides in the cell membrane. The enzyme catalyses a long-chain fatty acid + ATP + CoA = a long-chain fatty acyl-CoA + AMP + diphosphate. It functions in the pathway lipid metabolism; fatty acid biosynthesis. In terms of biological role, required for maintaining the appropriate mycolic acid composition and permeability of the envelope on its exposure to acidic pH. Catalyzes the activation of long-chain fatty acids as acyl-coenzyme A (acyl-CoA), which are then transferred to the multifunctional polyketide synthase (PKS) type III for further chain extension. The protein is Long-chain-fatty-acid--CoA ligase FadD13 (fadD13) of Mycobacterium tuberculosis (strain CDC 1551 / Oshkosh).